Consider the following 261-residue polypeptide: Putative methyltransferase MJ0046 (261 aa).

It belongs to the methyltransferase superfamily.

The protein is Putative methyltransferase MJ0046 of Methanocaldococcus jannaschii (strain ATCC 43067 / DSM 2661 / JAL-1 / JCM 10045 / NBRC 100440) (Methanococcus jannaschii).